The sequence spans 333 residues: N-acetyl-gamma-glutamyl-phosphate reductase (333 aa).

Cys-145 is a catalytic residue.

The protein belongs to the NAGSA dehydrogenase family. Type 1 subfamily.

It localises to the cytoplasm. It carries out the reaction N-acetyl-L-glutamate 5-semialdehyde + phosphate + NADP(+) = N-acetyl-L-glutamyl 5-phosphate + NADPH + H(+). The protein operates within amino-acid biosynthesis; L-arginine biosynthesis; N(2)-acetyl-L-ornithine from L-glutamate: step 3/4. In terms of biological role, catalyzes the NADPH-dependent reduction of N-acetyl-5-glutamyl phosphate to yield N-acetyl-L-glutamate 5-semialdehyde. The chain is N-acetyl-gamma-glutamyl-phosphate reductase from Salinispora tropica (strain ATCC BAA-916 / DSM 44818 / JCM 13857 / NBRC 105044 / CNB-440).